Reading from the N-terminus, the 918-residue chain is Interleukin-6 receptor subunit beta (918 aa).

A signal peptide spans M1–G22. Topologically, residues Q23 to E618 are extracellular. An Ig-like C2-type domain is found at E26–I120. Disulfide bonds link C28–C54 and C48–C103. N-linked (GlcNAc...) asparagine glycans are attached at residues N43, N61, N83, and N131. Fibronectin type-III domains lie at P125 to P215, P223 to D323, A328 to S418, A422 to A516, and P518 to F612. A disulfide bridge links C134 with C144. N157 is a glycosylation site (N-linked (GlcNAc...) asparagine). A disulfide bridge links C172 with C181. 2 N-linked (GlcNAc...) asparagine glycosylation sites follow: N205 and N226. The short motif at W309 to S313 is the WSXWS motif element. 2 N-linked (GlcNAc...) asparagine glycosylation sites follow: N382 and N389. C457 and C465 are joined by a disulfide. Residues N477 and N552 are each glycosylated (N-linked (GlcNAc...) asparagine). A helical transmembrane segment spans residues A619–F640. Residues N641–Q918 lie on the Cytoplasmic side of the membrane. A Box 1 motif motif is present at residues I650–S658. Disordered regions lie at residues K659 to D679, T720 to S754, V773 to L795, and S817 to E842. Residues S660 and S666 each carry the phosphoserine modification. Low complexity predominate over residues S730–S751. Positions V773–L785 are enriched in polar residues. Residues S781, S788, S828, and S838 each carry the phosphoserine modification.

This sequence belongs to the type I cytokine receptor family. Type 2 subfamily. Component of a hexamer of two molecules each of IL6, IL6R and IL6ST; associates with the complex IL6:IL6R but does not interact with IL6. Forms heterodimers composed of LIFR and IL6ST (type I OSM receptor) which are activated by LIF and OSM. Also forms heterodimers composed of OSMR and IL6ST (type II receptor) which are activated by OSM but not by LIF. Interacts with HCK. Interacts with INPP5D/SHIP1. Interacts with SRC and YES. Interacts with ARMH4; this interaction prevents IL6ST protein homodimerization and bridges ARMH4 with IL6R and STAT3 and therefore inhibits phosphorylation of STAT3 at 'Tyr-705'. Phosphorylation of Ser-781 down-regulates cell surface expression. Post-translationally, heavily N-glycosylated. Glycosylation is required for protein stability and localization in plasma membrane but not for ligand binding. In terms of tissue distribution, found in hepatocytes, astrocytes, fibroblasts and endothelial cells.

Its subcellular location is the cell membrane. Signal-transducing molecule. The receptor systems for IL6, LIF, OSM, CNTF, IL11, CTF1 and BSF3 can utilize IL6ST for initiating signal transmission. Binding of IL6 to IL6R induces IL6ST homodimerization and formation of a high-affinity receptor complex, which activates the intracellular JAK-MAPK and JAK-STAT3 signaling pathways. That causes phosphorylation of IL6ST tyrosine residues which in turn activates STAT3. In parallel, the IL6 signaling pathway induces the expression of two cytokine receptor signaling inhibitors, SOCS1 and SOCS3, which inhibit JAK and terminate the activity of the IL6 signaling pathway as a negative feedback loop. Also activates the yes-associated protein 1 (YAP) and NOTCH pathways to control inflammation-induced epithelial regeneration, independently of STAT3. Mediates signals which regulate immune response, hematopoiesis, pain control and bone metabolism. Has a role in embryonic development. Essential for survival of motor and sensory neurons and for differentiation of astrocytes. Required for expression of TRPA1 in nociceptive neurons. Required for the maintenance of PTH1R expression in the osteoblast lineage and for the stimulation of PTH-induced osteoblast differentiation. Required for normal trabecular bone mass and cortical bone composition. This chain is Interleukin-6 receptor subunit beta, found in Rattus norvegicus (Rat).